Consider the following 122-residue polypeptide: Large ribosomal subunit protein uL18 (122 aa).

It belongs to the universal ribosomal protein uL18 family. Part of the 50S ribosomal subunit; part of the 5S rRNA/L5/L18/L25 subcomplex. Contacts the 5S and 23S rRNAs.

In terms of biological role, this is one of the proteins that bind and probably mediate the attachment of the 5S RNA into the large ribosomal subunit, where it forms part of the central protuberance. The protein is Large ribosomal subunit protein uL18 of Buchnera aphidicola subsp. Acyrthosiphon pisum (strain 5A).